We begin with the raw amino-acid sequence, 223 residues long: Transcriptional regulatory protein HprR (223 aa).

The region spanning 2–115 is the Response regulatory domain; sequence KILLIEDNQR…ELLARVRAQL (114 aa). At Asp-51 the chain carries 4-aspartylphosphate. Residues 122-220 constitute a DNA-binding region (ompR/PhoB-type); that stretch reads NSTLEISGLR…IRGMGYSFVA (99 aa).

In terms of processing, phosphorylated by HprS.

The protein resides in the cytoplasm. Its function is as follows. Member of a two-component regulatory system HprR/HprS involved in response to hydrogen peroxide. Regulates the expression of at least 5 operons, cyoABCDE, hprRS, hiuH, cusRS and cusCFBA. Bifunctional regulator that acts as an activator and a repressor. The polypeptide is Transcriptional regulatory protein HprR (Escherichia coli (strain K12)).